Here is a 331-residue protein sequence, read N- to C-terminus: Adenosine deaminase (331 aa).

Positions 12 and 14 each coordinate Zn(2+). Residues H14, D16, and G170 each contribute to the substrate site. H197 is a Zn(2+) binding site. Catalysis depends on E200, which acts as the Proton donor. Position 278 (D278) interacts with Zn(2+).

It belongs to the metallo-dependent hydrolases superfamily. Adenosine and AMP deaminases family. Adenosine deaminase subfamily. It depends on Zn(2+) as a cofactor.

The enzyme catalyses adenosine + H2O + H(+) = inosine + NH4(+). It carries out the reaction 2'-deoxyadenosine + H2O + H(+) = 2'-deoxyinosine + NH4(+). In terms of biological role, catalyzes the hydrolytic deamination of adenosine and 2-deoxyadenosine. This chain is Adenosine deaminase, found in Vibrio vulnificus (strain CMCP6).